Consider the following 1152-residue polypeptide: Nucleolar protein 6 (1152 aa).

Disordered stretches follow at residues 1-30 (MPSAGERPAVKMGPAPAGEQHRRATEDPEV) and 36-55 (EGMDKEKAPSRKRARTEPPA). Ser-65 is modified (phosphoserine). A coiled-coil region spans residues 92-128 (LLRLQVEELLKEVRLSEKKKERIDNFLKEVTKRIQKV). 2 positions are modified to phosphoserine: Ser-292 and Ser-817.

Belongs to the NRAP family. As to quaternary structure, part of the small subunit (SSU) processome, composed of more than 70 proteins and the RNA chaperone small nucleolar RNA (snoRNA) U3. Interacts with RRP7A; required for NOL6 localization to nucleolus. Ubiquitously expressed.

The protein resides in the nucleus. Its subcellular location is the nucleolus. It localises to the chromosome. In terms of biological role, part of the small subunit (SSU) processome, first precursor of the small eukaryotic ribosomal subunit. During the assembly of the SSU processome in the nucleolus, many ribosome biogenesis factors, an RNA chaperone and ribosomal proteins associate with the nascent pre-rRNA and work in concert to generate RNA folding, modifications, rearrangements and cleavage as well as targeted degradation of pre-ribosomal RNA by the RNA exosome. This is Nucleolar protein 6 (Nol6) from Mus musculus (Mouse).